Reading from the N-terminus, the 66-residue chain is Cell division protein ZapB (66 aa).

A coiled-coil region spans residues 3-59 (LELLSQLETKIQATLENIELLKMELEEEKQKSTQLAEKNQKLQQDLNSWSDKVNGLV).

It belongs to the ZapB family. Homodimer. The ends of the coiled-coil dimer bind to each other, forming polymers. Interacts with FtsZ.

Its subcellular location is the cytoplasm. Non-essential, abundant cell division factor that is required for proper Z-ring formation. It is recruited early to the divisome by direct interaction with FtsZ, stimulating Z-ring assembly and thereby promoting cell division earlier in the cell cycle. Its recruitment to the Z-ring requires functional FtsA or ZipA. In Shewanella denitrificans (strain OS217 / ATCC BAA-1090 / DSM 15013), this protein is Cell division protein ZapB.